The following is a 283-amino-acid chain: Bifunctional protein FolD (283 aa).

Residues 165–167 (GRS), S190, and V231 each bind NADP(+).

It belongs to the tetrahydrofolate dehydrogenase/cyclohydrolase family. As to quaternary structure, homodimer.

It carries out the reaction (6R)-5,10-methylene-5,6,7,8-tetrahydrofolate + NADP(+) = (6R)-5,10-methenyltetrahydrofolate + NADPH. The enzyme catalyses (6R)-5,10-methenyltetrahydrofolate + H2O = (6R)-10-formyltetrahydrofolate + H(+). Its pathway is one-carbon metabolism; tetrahydrofolate interconversion. Its function is as follows. Catalyzes the oxidation of 5,10-methylenetetrahydrofolate to 5,10-methenyltetrahydrofolate and then the hydrolysis of 5,10-methenyltetrahydrofolate to 10-formyltetrahydrofolate. This Bacillus velezensis (strain DSM 23117 / BGSC 10A6 / LMG 26770 / FZB42) (Bacillus amyloliquefaciens subsp. plantarum) protein is Bifunctional protein FolD.